A 280-amino-acid polypeptide reads, in one-letter code: uncharacterized protein (280 aa).

Positions 1 to 78 (MDVIQRIKEK…VLLAQSISRA (78 aa)) constitute an HTH rpiR-type domain. Residues 37–57 (ISDLSEKAGVKSEASVVKFYK) constitute a DNA-binding region (H-T-H motif). The region spanning 123–263 (TVDLFKNAQR…YTLLAARDPR (141 aa)) is the SIS domain.

This is an uncharacterized protein from Thermotoga maritima (strain ATCC 43589 / DSM 3109 / JCM 10099 / NBRC 100826 / MSB8).